A 1020-amino-acid polypeptide reads, in one-letter code: X-linked retinitis pigmentosa GTPase regulator (1020 aa).

RCC1 repeat units follow at residues 54-105, 106-158, 159-208, 209-261, 262-313, and 314-367; these read NKLY…STEG, GNVY…LTED, GRLF…VTTD, GELY…LTEN, AVYT…ITDI, and GLMY…FAAP. A phosphoserine mark is found at serine 418 and serine 518. Disordered stretches follow at residues 609 to 776, 790 to 906, and 989 to 1020; these read HENN…IISK, EIPE…KEKA, and DNKD…CTIL. 8 stretches are compositionally biased toward basic and acidic residues: residues 618-636, 644-665, 685-698, 704-715, 760-771, 790-802, 816-853, and 883-906; these read LDAK…QKES, EKET…EKST, EENK…ESCK, DSERESVEKPDS, KLIEQGNEKETK, EIPE…EDSK, ENVK…LKLE, and SKTE…KEKA. A compositionally biased stretch (polar residues) spans 996–1009; that stretch reads NHMSQNHQNIPPTN. At cysteine 1017 the chain carries Cysteine methyl ester. Cysteine 1017 carries S-geranylgeranyl cysteine lipidation. Residues 1018–1020 constitute a propeptide, removed in mature form; sequence TIL.

In terms of assembly, interacts with SPATA7. Interacts with CEP290. Interacts with WHRN. Interacts with PDE6D. Interacts with RPGRIP1. Interacts with RPGRIP1L. PDE6D, RPGRIP1 and RPGRIP1L may compete for the same binding sites. Interacts with RAB37 and RAB8A (in GDP-bound forms); functions as GEF for RAB37 and RAB8A. Isoform 6 interacts with NPM1 (via C-terminus). Isoform 6 interacts with SMC1A and SMC3. Prenylated. Heart, brain, placenta, lung, liver, muscle, kidney, retina, pancreas and fetal retinal pigment epithelium. Isoform 3 is found only in the retina. Colocalizes with RPGRIP1 in the outer segment of rod photoreceptors and cone outer segments.

Its subcellular location is the cytoplasm. The protein localises to the cytoskeleton. The protein resides in the flagellum axoneme. It is found in the golgi apparatus. It localises to the cell projection. Its subcellular location is the cilium. The protein localises to the microtubule organizing center. The protein resides in the centrosome. It is found in the cilium basal body. It localises to the cilium axoneme. Acts as a guanine-nucleotide releasing factor (GEF) for RAB8A and RAB37 by promoting the conversion of inactive RAB-GDP to the active form RAB-GTP. GEF activity towards RAB8A may facilitate ciliary trafficking by modulating ciliary intracellular localization of RAB8A. GEF activity towards RAB37 maintains autophagic homeostasis and retinal function. Involved in photoreceptor integrity. May control cilia formation by regulating actin stress filaments and cell contractility. May be involved in microtubule organization and regulation of transport in primary cilia. May play a critical role in spermatogenesis and in intraflagellar transport processes. The protein is X-linked retinitis pigmentosa GTPase regulator of Homo sapiens (Human).